Consider the following 252-residue polypeptide: Hydroxyacylglutathione hydrolase (252 aa).

Positions 54, 56, 58, 59, 111, 128, and 166 each coordinate Zn(2+).

The protein belongs to the metallo-beta-lactamase superfamily. Glyoxalase II family. Monomer. Zn(2+) serves as cofactor.

It catalyses the reaction an S-(2-hydroxyacyl)glutathione + H2O = a 2-hydroxy carboxylate + glutathione + H(+). Its pathway is secondary metabolite metabolism; methylglyoxal degradation; (R)-lactate from methylglyoxal: step 2/2. Its function is as follows. Thiolesterase that catalyzes the hydrolysis of S-D-lactoyl-glutathione to form glutathione and D-lactic acid. The polypeptide is Hydroxyacylglutathione hydrolase (Aliivibrio fischeri (strain ATCC 700601 / ES114) (Vibrio fischeri)).